We begin with the raw amino-acid sequence, 663 residues long: Guanine nucleotide exchange factor subunit RGP1 (663 aa).

Phosphoserine occurs at positions 351, 354, 357, 363, 364, and 370. The tract at residues 412–443 (GKDEDSSDPEPNDSHFSNEMVTSAESSLRSDA) is disordered. Positions 426–440 (HFSNEMVTSAESSLR) are enriched in polar residues.

The protein belongs to the RGP1 family. As to quaternary structure, forms a complex with RIC1.

Its subcellular location is the golgi apparatus. Functionally, the RIC1-RGP1 complex acts as a guanine nucleotide exchange factor (GEF), which activates YPT6 by exchanging bound GDP for free GTP. It is thereby required for efficient fusion of endosome-derived vesicles with the Golgi. The RIC1-RGP1 participates in the recycling of SNC1, presumably by mediating fusion of endosomal vesicles with the Golgi compartment. Required for proper mitotic growth. In Saccharomyces cerevisiae (strain ATCC 204508 / S288c) (Baker's yeast), this protein is Guanine nucleotide exchange factor subunit RGP1.